Consider the following 338-residue polypeptide: Fructose-1,6-bisphosphatase class 1 (338 aa).

The Mg(2+) site is built by Glu-92, Asp-115, Leu-117, and Asp-118. Substrate contacts are provided by residues 118–121, Asn-211, Tyr-244, and Lys-274; that span reads DGSS. Glu-280 provides a ligand contact to Mg(2+).

This sequence belongs to the FBPase class 1 family. Homotetramer. The cofactor is Mg(2+).

It is found in the cytoplasm. The enzyme catalyses beta-D-fructose 1,6-bisphosphate + H2O = beta-D-fructose 6-phosphate + phosphate. The protein operates within carbohydrate biosynthesis; gluconeogenesis. The sequence is that of Fructose-1,6-bisphosphatase class 1 from Photobacterium profundum (strain SS9).